The sequence spans 218 residues: uncharacterized protein (218 aa).

7 residues coordinate Zn(2+): H57, H59, D61, H62, H138, D158, and H199.

It belongs to the metallo-beta-lactamase superfamily. Glyoxalase II family. The cofactor is Zn(2+).

This is an uncharacterized protein from Mycobacterium leprae (strain TN).